Consider the following 242-residue polypeptide: Beta-carotene ketolase (242 aa).

It catalyses the reaction all-trans-beta-carotene + 2 AH2 + 2 O2 = echinenone + 2 A + 3 H2O. The enzyme catalyses echinenone + 2 AH2 + 2 O2 = canthaxanthin + 2 A + 3 H2O. The protein operates within carotenoid biosynthesis; astaxanthin biosynthesis. In terms of biological role, converts beta-carotene to canthaxanthin via echinenone. In Paracoccus sp. (strain PC1) (Alcaligenes sp. (strain PC1)), this protein is Beta-carotene ketolase.